The following is a 318-amino-acid chain: MGYDVTRFQGEVDEDLLCPICSGVLEEPVRAPHCEHAFCNACITQWFAQQQICPVDRTVVTLAHLRPVPRIMRNMLSKLQISCDNAGFGCTATLRLDQLQSHLKDCEHNPKRPVTCEEGCGLEMPKDEMPNHNCIKHLRSVVQQQQTKIADLEKTAAEHKHQLAEQKRDIQLLKAYMRAIRSANPNLQNLEESIEYNEILEWVNSLQPARVTRWGGMISTPDAVLQAVIKRSLIDSGCPLSIVNDLIENAHERNWPQGLATLETRQMNRRYYENYVAKRIPGKQAVVVMACENQHMGEDMILEPGLVMIFAHGVEEIL.

Residues 18-57 (CPICSGVLEEPVRAPHCEHAFCNACITQWFAQQQICPVDR) form an RING-type; degenerate zinc finger. An SIAH-type; degenerate zinc finger spans residues 78 to 138 (KLQISCDNAG…MPNHNCIKHL (61 aa)).

The enzyme catalyses S-ubiquitinyl-[E2 ubiquitin-conjugating enzyme]-L-cysteine + [acceptor protein]-L-lysine = [E2 ubiquitin-conjugating enzyme]-L-cysteine + N(6)-ubiquitinyl-[acceptor protein]-L-lysine.. It participates in protein modification; protein ubiquitination. Functionally, acts as E3 ubiquitin-protein ligase and regulates the degradation of target proteins. In Danio rerio (Zebrafish), this protein is E3 ubiquitin-protein ligase NRDP1 (rnf41).